The primary structure comprises 203 residues: Probable cytochrome c oxidase subunit 3 (203 aa).

The next 5 membrane-spanning stretches (helical) occupy residues 30–50 (IVWL…YFTA), 70–90 (AVPV…GVFA), 102–122 (WYVI…YEYY), 142–162 (LATG…IFLL), and 179–199 (IVVS…FTVI).

This sequence belongs to the cytochrome c oxidase subunit 3 family.

The protein localises to the cell membrane. The catalysed reaction is 4 Fe(II)-[cytochrome c] + O2 + 8 H(+)(in) = 4 Fe(III)-[cytochrome c] + 2 H2O + 4 H(+)(out). This Mycolicibacterium paratuberculosis (strain ATCC BAA-968 / K-10) (Mycobacterium paratuberculosis) protein is Probable cytochrome c oxidase subunit 3 (ctaE).